Here is a 769-residue protein sequence, read N- to C-terminus: Protein lethal(2)denticleless (769 aa).

WD repeat units follow at residues 99–129, 143–174, 194–249, 264–303, 320–349, and 362–393; these read CHFN…RLWE, GHTR…LIWD, GHTG…KVWD, RHKL…YCYN, NSTF…YIWN, and GHTV…KIWR. The disordered stretch occupies residues 196 to 221; that stretch reads TGGPGTPVSQRKQRTRTPKMAGGTTS. A Phosphothreonine modification is found at T201. Phosphoserine is present on S204. Disordered regions lie at residues 448-467, 476-562, and 655-769; these read RLMD…TTKR, AGQE…HVYT, and SPRL…VGSD. The residue at position 456 (T456) is a Phosphothreonine. S459 carries the phosphoserine modification. The segment covering 503 to 518 has biased composition (polar residues); that stretch reads PSSQETACRHIQLQSI. Phosphoserine is present on S524. Residues 524–533 are compositionally biased toward basic and acidic residues; that stretch reads SPSKRQKENS. Residues 546–562 are compositionally biased toward polar residues; sequence STPSHSPLSENVNHVYT. Residue S655 is modified to Phosphoserine. Residues 657 to 666 show a composition bias toward polar residues; sequence RLQSLRQSEC. Residues S679, S691, and S711 each carry the phosphoserine modification. The span at 689–704 shows a compositional bias: low complexity; sequence AGSSSHSHSQSQPKTP. The span at 705 to 714 shows a compositional bias: polar residues; it reads TSSRRNSETT. Residues 728-743 are compositionally biased toward low complexity; it reads PAEETTTTNAAPSSSD. Residues 758 to 769 show a composition bias toward polar residues; sequence SMRTPTTAVGSD.

It belongs to the WD repeat cdt2 family. Component of the DCX(DTL) E3 ubiquitin ligase complex, at least composed of Cul-4, pic/DDB1, l(2)dtl/CDT2 and Roc1a. As to expression, ubiquitously expressed during embryogenesis with no sign of tissue specificity in expression up to stage 17.

The protein localises to the cytoplasm. It functions in the pathway protein modification; protein ubiquitination. Functionally, substrate-specific adapter of a DCX (DDB1-CUL4-X-box) E3 ubiquitin-protein ligase complex required for cell cycle control. The DCX(DTL) complex, also named CRL4(CDT2) complex, mediates the polyubiquitination and subsequent degradation of E2f during S phase. E2f degradation is necessary to ensure proper development. Substrates require their interaction with PCNA for their polyubiquitination: substrates interact with PCNA via their PIP-box, leading to recruit the DCX(DTL) complex. The chain is Protein lethal(2)denticleless (l(2)dtl) from Drosophila melanogaster (Fruit fly).